Reading from the N-terminus, the 263-residue chain is uncharacterized protein (263 aa).

The protein belongs to the A.longa ORF167/ORF288 family.

The protein resides in the plastid. This is an uncharacterized protein from Euglena longa (Euglenophycean alga).